We begin with the raw amino-acid sequence, 61 residues long: Bacteriocin mesentericin Y105 (61 aa).

The first 24 residues, 1–24, serve as a signal peptide directing secretion; it reads MTNMKSVEAYQQLDNQNLKKVVGG. Residues Cys33 and Cys38 are joined by a disulfide bond.

It belongs to the bacteriocin class IIA/YGNGV family.

It is found in the secreted. Functionally, bacteriocin active against Listeria monocytogenes. In Leuconostoc mesenteroides, this protein is Bacteriocin mesentericin Y105 (mesY).